The following is a 342-amino-acid chain: Dihydroorotase (342 aa).

Histidine 13 and histidine 15 together coordinate Zn(2+). Residues 15–17 (HLR) and asparagine 41 contribute to the substrate site. Residues lysine 97, histidine 134, and histidine 172 each coordinate Zn(2+). Lysine 97 is subject to N6-carboxylysine. Histidine 134 contributes to the substrate binding site. Leucine 217 contributes to the substrate binding site. Position 245 (aspartate 245) interacts with Zn(2+). Aspartate 245 is an active-site residue. Substrate-binding residues include histidine 249 and alanine 261.

Belongs to the metallo-dependent hydrolases superfamily. DHOase family. Class II DHOase subfamily. Homodimer. Zn(2+) is required as a cofactor.

The catalysed reaction is (S)-dihydroorotate + H2O = N-carbamoyl-L-aspartate + H(+). It participates in pyrimidine metabolism; UMP biosynthesis via de novo pathway; (S)-dihydroorotate from bicarbonate: step 3/3. Its function is as follows. Catalyzes the reversible cyclization of carbamoyl aspartate to dihydroorotate. The sequence is that of Dihydroorotase from Shewanella amazonensis (strain ATCC BAA-1098 / SB2B).